A 302-amino-acid polypeptide reads, in one-letter code: Rab effector Noc2 (302 aa).

Residues 41–158 (QRRTQCLSPG…KRSGAWFYKG (118 aa)) enclose the RabBD domain. Residues 89–146 (GNGVSQCLLCGEMLGFLGSSSVFCKDCRKKVCTKCGIEASPGQKRPLWLCKICSEQRE) form an FYVE-type zinc finger. Zn(2+) is bound by residues cysteine 95, cysteine 98, cysteine 112, cysteine 115, cysteine 120, cysteine 123, cysteine 138, and cysteine 141. 2 disordered regions span residues 174-194 (DPHFRPLPVEPTEPQPQSAEV) and 206-302 (VSSD…TTHY). Serine 248 carries the post-translational modification Phosphoserine. Residues 258-269 (SHLSGSQSSLGS) are compositionally biased toward low complexity.

Recruited to dense-core vesicles through specific interaction with RAB27A in endocrine cells. Interacts with RAB3A, RAB3B, RAB3C and RAB3D. Interacts with ZYX. Highly expressed in pancreatic islets and parotid. High to moderate expression in adrenal gland, pituitary gland and ovary.

The protein resides in the cytoplasm. Its subcellular location is the cytoplasmic vesicle. The protein localises to the secretory vesicle membrane. Rab GTPase effector involved in the late steps of regulated exocytosis, both in endocrine and exocrine cells. Regulates the exocytosis of dense-core vesicles in neuroendocrine cells through interaction with RAB27A. Acts as a potential RAB3B effector protein in epithelial cells. This chain is Rab effector Noc2 (Rph3al), found in Rattus norvegicus (Rat).